A 125-amino-acid polypeptide reads, in one-letter code: Small ribosomal subunit protein uS12 (125 aa).

Position 89 is a 3-methylthioaspartic acid (Asp89).

It belongs to the universal ribosomal protein uS12 family. As to quaternary structure, part of the 30S ribosomal subunit. Contacts proteins S8 and S17. May interact with IF1 in the 30S initiation complex.

With S4 and S5 plays an important role in translational accuracy. In terms of biological role, interacts with and stabilizes bases of the 16S rRNA that are involved in tRNA selection in the A site and with the mRNA backbone. Located at the interface of the 30S and 50S subunits, it traverses the body of the 30S subunit contacting proteins on the other side and probably holding the rRNA structure together. The combined cluster of proteins S8, S12 and S17 appears to hold together the shoulder and platform of the 30S subunit. This chain is Small ribosomal subunit protein uS12, found in Wigglesworthia glossinidia brevipalpis.